The primary structure comprises 690 residues: Elongation factor G (690 aa).

Positions 8–283 constitute a tr-type G domain; that stretch reads EDYRNFGIMA…AVVAYLPSPL (276 aa). Residues 17–24, 81–85, and 135–138 each bind GTP; these read AHIDAGKT, DTPGH, and NKMD.

Belongs to the TRAFAC class translation factor GTPase superfamily. Classic translation factor GTPase family. EF-G/EF-2 subfamily.

Its subcellular location is the cytoplasm. Its function is as follows. Catalyzes the GTP-dependent ribosomal translocation step during translation elongation. During this step, the ribosome changes from the pre-translocational (PRE) to the post-translocational (POST) state as the newly formed A-site-bound peptidyl-tRNA and P-site-bound deacylated tRNA move to the P and E sites, respectively. Catalyzes the coordinated movement of the two tRNA molecules, the mRNA and conformational changes in the ribosome. The protein is Elongation factor G of Nitrobacter winogradskyi (strain ATCC 25391 / DSM 10237 / CIP 104748 / NCIMB 11846 / Nb-255).